The following is a 218-amino-acid chain: Uracil-DNA glycosylase (218 aa).

Asp-59 functions as the Proton acceptor in the catalytic mechanism.

It belongs to the uracil-DNA glycosylase (UDG) superfamily. UNG family.

The protein resides in the cytoplasm. The catalysed reaction is Hydrolyzes single-stranded DNA or mismatched double-stranded DNA and polynucleotides, releasing free uracil.. Excises uracil residues from the DNA which can arise as a result of misincorporation of dUMP residues by DNA polymerase or due to deamination of cytosine. This Staphylococcus aureus (strain JH1) protein is Uracil-DNA glycosylase.